The sequence spans 188 residues: Putative pre-16S rRNA nuclease (188 aa).

The disordered stretch occupies residues 156–188 (LRQGDAAPGGSDDERDEDGDTDGEDGGGDGGGE). Residues 166-188 (SDDERDEDGDTDGEDGGGDGGGE) are compositionally biased toward acidic residues.

Belongs to the YqgF nuclease family.

It localises to the cytoplasm. In terms of biological role, could be a nuclease involved in processing of the 5'-end of pre-16S rRNA. This is Putative pre-16S rRNA nuclease from Rhodospirillum centenum (strain ATCC 51521 / SW).